A 356-amino-acid chain; its full sequence is Glutamine synthetase cytosolic isozyme 1-1 (356 aa).

Residues 19–99 (IIAEYIWIGG…VMCDCYTPAG (81 aa)) enclose the GS beta-grasp domain. Positions 106–356 (KRHNAAKIFS…IAETTIIWKP (251 aa)) constitute a GS catalytic domain.

It belongs to the glutamine synthetase family. Homooctamer. In terms of tissue distribution, highly expressed in leaf blades, at intermediate levels in spikelets (rice flower) and at lower levels in roots.

The protein localises to the cytoplasm. It carries out the reaction L-glutamate + NH4(+) + ATP = L-glutamine + ADP + phosphate + H(+). Functionally, high-affinity glutamine synthetase involved in ammonium assimilation. Seems to be a major component of the cytosolic glutamine synthetic pathway in leaf blades. Plays an important role in maintaining carbon and nitrogen metabolic balance during ammonium assimilation in shoots and roots, thus controlling plant growth and development. Plays an important role in maintaining broad range of metabolites and transcripts involved in the maintenance of plant metabolic homeostasis and development of plastid in roots. This is Glutamine synthetase cytosolic isozyme 1-1 from Oryza sativa subsp. japonica (Rice).